Reading from the N-terminus, the 276-residue chain is Undecaprenyl-diphosphatase (276 aa).

8 helical membrane-spanning segments follow: residues 1–21 (MELYQGVVLGVLQGLTEFLPV), 40–60 (ALSFDISVHLGTLFAVALVFF), 93–113 (VRLAALIIVGSIPTAVIGLIL), 120–140 (LFSSLVIVGSMLMVTGTFLWL), 154–174 (IGFGTALFIGVCQGVAVIPGI), 199–219 (FLLSMPAIAGAEILSLKESFA), 227–247 (VTLLSTLTAFIVGTLALVALL), and 255–275 (FYLFAPYCWVVGLISIIAGFV).

It belongs to the UppP family.

It localises to the cell inner membrane. The enzyme catalyses di-trans,octa-cis-undecaprenyl diphosphate + H2O = di-trans,octa-cis-undecaprenyl phosphate + phosphate + H(+). In terms of biological role, catalyzes the dephosphorylation of undecaprenyl diphosphate (UPP). Confers resistance to bacitracin. This Desulforapulum autotrophicum (strain ATCC 43914 / DSM 3382 / VKM B-1955 / HRM2) (Desulfobacterium autotrophicum) protein is Undecaprenyl-diphosphatase.